The sequence spans 506 residues: MAP kinase kinase MKK2/SSP33 (506 aa).

A disordered region spans residues 1-69 (MASMFRPPES…TSTTSSMASN (69 aa)). A compositionally biased stretch (polar residues) spans 26 to 52 (LVQNAKSTNDGQHLNRSPYSSVNESPY). The span at 53–69 (SNNSTSATSTTSSMASN) shows a compositional bias: low complexity. The 268-residue stretch at 214–481 (ITTLGILGEG…PRQMLKHPWI (268 aa)) folds into the Protein kinase domain. ATP is bound by residues 220 to 228 (LGEGAGGSV) and K243. Residue D342 is the Proton acceptor of the active site.

The protein belongs to the protein kinase superfamily. STE Ser/Thr protein kinase family. MAP kinase kinase subfamily.

It catalyses the reaction L-seryl-[protein] + ATP = O-phospho-L-seryl-[protein] + ADP + H(+). The catalysed reaction is L-threonyl-[protein] + ATP = O-phospho-L-threonyl-[protein] + ADP + H(+). It carries out the reaction L-tyrosyl-[protein] + ATP = O-phospho-L-tyrosyl-[protein] + ADP + H(+). Serine/threonine protein kinase involved in a signal transduction pathway that plays a role in yeast cell morphogenesis and cell growth. This pathway seems to start by SMP3; then involves the kinase PKC1 that may act on the BCK1 kinase that then phosphorylates MKK1 and MKK2 which themselves phosphorylate the MPK1 kinase. This Saccharomyces cerevisiae (strain ATCC 204508 / S288c) (Baker's yeast) protein is MAP kinase kinase MKK2/SSP33 (MKK2).